Reading from the N-terminus, the 350-residue chain is Phenylalanine--tRNA ligase alpha subunit (350 aa).

E257 contributes to the Mg(2+) binding site.

It belongs to the class-II aminoacyl-tRNA synthetase family. Phe-tRNA synthetase alpha subunit type 1 subfamily. In terms of assembly, tetramer of two alpha and two beta subunits. It depends on Mg(2+) as a cofactor.

The protein localises to the cytoplasm. It carries out the reaction tRNA(Phe) + L-phenylalanine + ATP = L-phenylalanyl-tRNA(Phe) + AMP + diphosphate + H(+). In Listeria monocytogenes serotype 4b (strain CLIP80459), this protein is Phenylalanine--tRNA ligase alpha subunit.